The primary structure comprises 178 residues: Bifunctional protein PyrR (178 aa).

Residues 42–43 (TR), Arg-83, 103–111 (DDVIYKGRT), Arg-136, and Val-160 each bind substrate. The PRPP-binding motif lies at 99–111 (VVLVDDVIYKGRT).

It belongs to the purine/pyrimidine phosphoribosyltransferase family. PyrR subfamily.

It carries out the reaction UMP + diphosphate = 5-phospho-alpha-D-ribose 1-diphosphate + uracil. Its function is as follows. Regulates the transcription of the pyrimidine nucleotide (pyr) operon in response to exogenous pyrimidines. In terms of biological role, also displays a weak uracil phosphoribosyltransferase activity which is not physiologically significant. This Synechocystis sp. (strain ATCC 27184 / PCC 6803 / Kazusa) protein is Bifunctional protein PyrR.